A 280-amino-acid chain; its full sequence is Ribosomal RNA-processing protein 7 homolog A (280 aa).

The region spanning 59–159 (RTLFVLNVPP…SGIHKWISDY (101 aa)) is the RRM domain. The residue at position 99 (serine 99) is a Phosphoserine.

It belongs to the RRP7 family. In terms of assembly, part of the small subunit (SSU) processome, composed of more than 70 proteins and the RNA chaperone small nucleolar RNA (snoRNA) U3. Interacts with NOL6; required for NOL6 localization to nucleolus. As to expression, expressed in the apical radial glial cells in the developing brain.

It localises to the nucleus. It is found in the nucleolus. The protein resides in the cell projection. The protein localises to the cilium. Its subcellular location is the cytoplasm. It localises to the cytoskeleton. It is found in the microtubule organizing center. The protein resides in the centrosome. Functionally, nucleolar protein that is involved in ribosomal RNA (rRNA) processing. Also plays a role in primary cilia resorption, and cell cycle progression in neurogenesis and neocortex development. Part of the small subunit (SSU) processome, first precursor of the small eukaryotic ribosomal subunit. During the assembly of the SSU processome in the nucleolus, many ribosome biogenesis factors, an RNA chaperone and ribosomal proteins associate with the nascent pre-rRNA and work in concert to generate RNA folding, modifications, rearrangements and cleavage as well as targeted degradation of pre-ribosomal RNA by the RNA exosome. The chain is Ribosomal RNA-processing protein 7 homolog A from Homo sapiens (Human).